A 688-amino-acid chain; its full sequence is Complement C1s subcomponent (688 aa).

The first 15 residues, 1–15, serve as a signal peptide directing secretion; sequence MWCFVFFSLLASFSA. The region spanning 16–130 is the CUB 1 domain; that stretch reads EPTMYGEILS…TGFAAYYSAV (115 aa). Residues Glu-60, Asp-68, Asp-113, Asp-131, Val-132, and Glu-134 each contribute to the Ca(2+) site. A disulfide bridge connects residues Cys-65 and Cys-83. In terms of domain architecture, EGF-like; calcium-binding spans 131 to 172; the sequence is DVNECTDFTDVPCSHFCNNFIGGYFCSCPPEYFLHDDMRTCG. Disulfide bonds link Cys-135/Cys-147, Cys-143/Cys-156, and Cys-158/Cys-171. Positions 149, 150, and 153 each coordinate Ca(2+). (3R)-3-hydroxyasparagine is present on Asn-149. N-linked (GlcNAc...) asparagine glycosylation is present at Asn-174. A disulfide bridge links Cys-175 with Cys-202. Residues 175–290 form the CUB 2 domain; it reads CSGDVFTALI…KGWKLRYHGD (116 aa). Ca(2+)-binding residues include Glu-226, Asp-236, Asp-275, Gly-278, and Gln-279. An intrachain disulfide couples Cys-234 to Cys-251. Sushi domains lie at 292 to 356 and 357 to 423; these read IPCP…ECQP and VDCG…KCIP. Intrachain disulfides connect Cys-294/Cys-341, Cys-321/Cys-354, Cys-359/Cys-403, Cys-386/Cys-421, Cys-425/Cys-549, Cys-595/Cys-618, and Cys-627/Cys-659. An N-linked (GlcNAc...) asparagine glycan is attached at Asn-406. Residues 438–680 form the Peptidase S1 domain; it reads IFGGYSTKIQ…YVDWILKTMQ (243 aa). Residues His-475 and Asp-529 each act as charge relay system in the active site. The active-site Charge relay system is Ser-631.

This sequence belongs to the peptidase S1 family. As to quaternary structure, core component of the complement C1 complex, a calcium-dependent complex composed of 1 molecule of the C1Q subcomplex, 2 molecules of C1R and 2 molecules of C1S. The C1Q subcomplex is composed 18 subunits: 3 chains of C1QA, C1QB, and C1QC trimerize to form 6 collagen-like triple helices connected to six globular ligand-recognition modules. In terms of processing, cleaved and activated by C1R to generate Complement C1s subcomponent heavy and light chains. The iron and 2-oxoglutarate dependent 3-hydroxylation of aspartate and asparagine is (R) stereospecific within EGF domains.

The protein localises to the secreted. It localises to the cell surface. The enzyme catalyses Cleavage of Arg-|-Ala bond in complement component C4 to form C4a and C4b, and Lys(or Arg)-|-Lys bond in complement component C2 to form C2a and C2b: the 'classical' pathway C3 convertase.. With respect to regulation, cleaved and activated by C1R. Immunoglobulin-binding promotes autoactivation of C1R, which results in the cleavage of the Arg-Ile bond in the catalytic domain. Inhibited by C1 inhibitor (SERPING1). Its function is as follows. Component of the complement C1 complex, a multiprotein complex that initiates the classical pathway of the complement system, a cascade of proteins that leads to phagocytosis and breakdown of pathogens and signaling that strengthens the adaptive immune system. C1S is activated following association of the C1 complex with immunoglobulins (IgG or IgM) complexed with antigens to form antigen-antibody complexes on the surface of pathogens. C1S is cleaved and activated by C1R to generate C1s subcomponent heavy and light chains. C1s subcomponent light chain then cleaves and activates C2 and C4, the next components of the classical complement pathway. Functionally, serine protease component of the complement C1 complex, which catalyzes cleavage and activation of C2 and C4, the next components of the classical complement pathway. Also cleaves IGFBP5 and thereby inhibits the trophic effects of IGF1. This is Complement C1s subcomponent from Rattus norvegicus (Rat).